Here is a 356-residue protein sequence, read N- to C-terminus: sn-glycerol-3-phosphate import ATP-binding protein UgpC (356 aa).

The region spanning 4-235 (LKLQAVTKSW…PASRFVASFI (232 aa)) is the ABC transporter domain. Position 37 to 44 (37 to 44 (GPSGCGKS)) interacts with ATP.

It belongs to the ABC transporter superfamily. sn-glycerol-3-phosphate importer (TC 3.A.1.1.3) family. In terms of assembly, the complex is composed of two ATP-binding proteins (UgpC), two transmembrane proteins (UgpA and UgpE) and a solute-binding protein (UgpB).

It localises to the cell inner membrane. The catalysed reaction is sn-glycerol 3-phosphate(out) + ATP + H2O = sn-glycerol 3-phosphate(in) + ADP + phosphate + H(+). Part of the ABC transporter complex UgpBAEC involved in sn-glycerol-3-phosphate (G3P) import. Responsible for energy coupling to the transport system. This Salmonella paratyphi A (strain ATCC 9150 / SARB42) protein is sn-glycerol-3-phosphate import ATP-binding protein UgpC.